Consider the following 155-residue polypeptide: Protein archease-like (155 aa).

Positions 26, 154, and 155 each coordinate Ca(2+).

The protein belongs to the archease family.

Its function is as follows. Component of the tRNA-splicing ligase complex required to facilitate the enzymatic turnover of catalytic subunit RtcB (F16A11.2). In Caenorhabditis elegans, this protein is Protein archease-like.